We begin with the raw amino-acid sequence, 511 residues long: Phosphoenolpyruvate carboxylase (511 aa).

It belongs to the PEPCase type 2 family. As to quaternary structure, homotetramer. It depends on Mg(2+) as a cofactor.

It catalyses the reaction oxaloacetate + phosphate = phosphoenolpyruvate + hydrogencarbonate. In terms of biological role, catalyzes the irreversible beta-carboxylation of phosphoenolpyruvate (PEP) to form oxaloacetate (OAA), a four-carbon dicarboxylic acid source for the tricarboxylic acid cycle. In Saccharolobus islandicus (strain Y.G.57.14 / Yellowstone #1) (Sulfolobus islandicus), this protein is Phosphoenolpyruvate carboxylase.